Consider the following 157-residue polypeptide: Endoribonuclease YbeY (157 aa).

Histidine 114, histidine 118, and histidine 124 together coordinate Zn(2+).

The protein belongs to the endoribonuclease YbeY family. It depends on Zn(2+) as a cofactor.

The protein resides in the cytoplasm. Single strand-specific metallo-endoribonuclease involved in late-stage 70S ribosome quality control and in maturation of the 3' terminus of the 16S rRNA. This Salmonella paratyphi A (strain AKU_12601) protein is Endoribonuclease YbeY.